Consider the following 300-residue polypeptide: MASRSPSSSPDSATGSGTDPARPDTGEPLGGGSDSDSDFGLGKFDCSAGDASARLEGADLENEFESAADRVRDLVQTASREQLLYLYARFKQVKVGKCNTSKPGFFDFEGQRKWSAWKQLGDMSAEQAMQEYVTCVHALDPEGSQKSSERRGGEKRTGFGGPAVSSLYQEEKIREEDKNIFDYCRENNIEHVSKAISSKTVDVNTRDEEGRALLHWACDRGHKDLVSLLLQNNADINSQDDEGQTALHYASACEFAEIVELLLKAGADPSIKDQEGSLPEEVTESSAISSLLRQYTAPKG.

Over residues 1–19 the composition is skewed to low complexity; sequence MASRSPSSSPDSATGSGTD. Residues 1 to 43 form a disordered region; sequence MASRSPSSSPDSATGSGTDPARPDTGEPLGGGSDSDSDFGLGK. An ACB domain is found at 60 to 145; sequence LENEFESAAD…VHALDPEGSQ (86 aa). An acyl-CoA contacts are provided by residues 87 to 91, Lys113, and Tyr132; that span reads YARFK. Positions 142-162 are disordered; the sequence is EGSQKSSERRGGEKRTGFGGP. Positions 147–157 are enriched in basic and acidic residues; the sequence is SSERRGGEKRT. 2 ANK repeats span residues 209-238 and 242-271; these read EGRA…DINS and EGQT…DPSI. Residues 270–300 form a disordered region; sequence SIKDQEGSLPEEVTESSAISSLLRQYTAPKG. The segment covering 284 to 293 has biased composition (polar residues); it reads ESSAISSLLR.

Higly expressed in the central nervous system, developing eyes, otic vesicle, and trunk muscles.

It is found in the cytoplasm. Its subcellular location is the nucleus. Binds long-chain acyl-coenzyme A molecules with a strong preference for unsaturated C18:1-CoA. Does not bind fatty acids. Plays a role in protein N-myristoylation. This is Acyl-CoA-binding domain-containing protein 6 (acbd6) from Danio rerio (Zebrafish).